Consider the following 229-residue polypeptide: MKPRTSPDSPLLFDTAPLVPDFRLELKARKAGHWPVAGADEAGRGPLAGPVVAAAVILDPKRIPEGLNDSKQLSAQRREELFVQILATATVSIASSSSTRIDETDIRKASLDAMRRAICSLAVPASYVLTDGLDVPPGLDCPGQAVVKGDARSVSIAAASIVAKVTRDRMMARAHNVFPDYGFAAHAGYGTAQHRTGIEKHGPCSLHRMSFRPLRKSEDGPEMDELIPE.

The RNase H type-2 domain occupies 34–223; sequence WPVAGADEAG…LRKSEDGPEM (190 aa). Positions 40, 41, and 131 each coordinate a divalent metal cation. The disordered stretch occupies residues 209–229; sequence MSFRPLRKSEDGPEMDELIPE. A compositionally biased stretch (acidic residues) spans 220-229; the sequence is GPEMDELIPE.

This sequence belongs to the RNase HII family. Mn(2+) is required as a cofactor. The cofactor is Mg(2+).

The protein localises to the cytoplasm. It carries out the reaction Endonucleolytic cleavage to 5'-phosphomonoester.. Functionally, endonuclease that specifically degrades the RNA of RNA-DNA hybrids. This chain is Ribonuclease HII, found in Rhizobium etli (strain CIAT 652).